Consider the following 209-residue polypeptide: Regulator of G-protein signaling 1 (209 aa).

A disordered region spans residues 19 to 42 (FSASPKDSKEHSHSLLDDKKQKKR). Positions 24 to 38 (KDSKEHSHSLLDDKK) are enriched in basic and acidic residues. One can recognise an RGS domain in the interval 85–200 (SLEKLLANQT…LKSNIYLNLL (116 aa)).

As to quaternary structure, interacts with GNAI1 and GNAQ. Detected in spleen, lymph node and intestine.

The protein localises to the cell membrane. The protein resides in the cytoplasm. It localises to the cytosol. In terms of biological role, regulates G protein-coupled receptor signaling cascades, including signaling downstream of the N-formylpeptide chemoattractant receptors and leukotriene receptors. Inhibits B cell chemotaxis toward CXCL12. Inhibits signal transduction by increasing the GTPase activity of G protein alpha subunits thereby driving them into their inactive GDP-bound form. This chain is Regulator of G-protein signaling 1 (Rgs1), found in Mus musculus (Mouse).